A 325-amino-acid polypeptide reads, in one-letter code: Ribosomal RNA small subunit methyltransferase H (325 aa).

Residues 45 to 47 (GGH), D65, Y92, D113, and Q120 each bind S-adenosyl-L-methionine.

The protein belongs to the methyltransferase superfamily. RsmH family.

Its subcellular location is the cytoplasm. It carries out the reaction cytidine(1402) in 16S rRNA + S-adenosyl-L-methionine = N(4)-methylcytidine(1402) in 16S rRNA + S-adenosyl-L-homocysteine + H(+). Specifically methylates the N4 position of cytidine in position 1402 (C1402) of 16S rRNA. The chain is Ribosomal RNA small subunit methyltransferase H from Oleidesulfovibrio alaskensis (strain ATCC BAA-1058 / DSM 17464 / G20) (Desulfovibrio alaskensis).